The sequence spans 298 residues: Inosose dehydratase (298 aa).

This sequence belongs to the IolE/MocC family. Requires glutathione as cofactor. Co(2+) serves as cofactor. Mn(2+) is required as a cofactor.

It catalyses the reaction scyllo-inosose = 3D-3,5/4-trihydroxycyclohexane-1,2-dione + H2O. The protein operates within polyol metabolism; myo-inositol degradation into acetyl-CoA; acetyl-CoA from myo-inositol: step 2/7. Functionally, catalyzes the dehydration of inosose (2-keto-myo-inositol, 2KMI or 2,4,6/3,5-pentahydroxycyclohexanone) to 3D-(3,5/4)-trihydroxycyclohexane-1,2-dione (D-2,3-diketo-4-deoxy-epi-inositol). In Clostridium beijerinckii (strain ATCC 51743 / NCIMB 8052) (Clostridium acetobutylicum), this protein is Inosose dehydratase.